Here is an 80-residue protein sequence, read N- to C-terminus: Large ribosomal subunit protein eL14 (80 aa).

This sequence belongs to the eukaryotic ribosomal protein eL14 family.

This chain is Large ribosomal subunit protein eL14, found in Methanocaldococcus jannaschii (strain ATCC 43067 / DSM 2661 / JAL-1 / JCM 10045 / NBRC 100440) (Methanococcus jannaschii).